Here is a 194-residue protein sequence, read N- to C-terminus: Probable GTP-binding protein EngB (194 aa).

Residues 22–194 enclose the EngB-type G domain; the sequence is GKPEIALVGR…SVWEWITAHM (173 aa). Residues 30-37, 57-61, 75-78, 142-145, and 175-177 each bind GTP; these read GRSNVGKS, GKTQT, DVPG, TKSD, and FSS. Mg(2+) is bound by residues Ser-37 and Thr-59.

It belongs to the TRAFAC class TrmE-Era-EngA-EngB-Septin-like GTPase superfamily. EngB GTPase family. Requires Mg(2+) as cofactor.

In terms of biological role, necessary for normal cell division and for the maintenance of normal septation. The polypeptide is Probable GTP-binding protein EngB (Leuconostoc citreum (strain KM20)).